A 567-amino-acid chain; its full sequence is Pyrethroid hydrolase Ces2e (567 aa).

Positions 1 to 36 (MAQTRAWKSIMPLESLPGWLNAVVWGLLLLFCQVQG) are cleaved as a signal peptide. The residue at position 37 (Gln37) is a Pyrrolidone carboxylic acid. An intrachain disulfide couples Cys105 to Cys132. Ser237 functions as the Acyl-ester intermediate in the catalytic mechanism. An intrachain disulfide couples Cys289 to Cys300. Active-site charge relay system residues include Glu354 and His465.

The protein belongs to the type-B carboxylesterase/lipase family. In terms of tissue distribution, expressed in liver.

The protein resides in the microsome. The enzyme catalyses all-trans-retinyl hexadecanoate + H2O = all-trans-retinol + hexadecanoate + H(+). It carries out the reaction (-)-trans-permethrin + H2O = (3-phenoxyphenyl)methanol + (1S,3R)-3-(2,2-dichlorovinyl)-2,2-dimethylcyclopropanecarboxylate + H(+). Carboxylesterase that catalyzes the hydrolysis of pyrethroids pesticides. Hydrolyzes trans-permethrin at a rate about 22-fold higher than cis-permethrin. Also hydrolyzes trans-cypermethrin. Hydrolyzes retinyl esters. The polypeptide is Pyrethroid hydrolase Ces2e (Rattus norvegicus (Rat)).